The chain runs to 89 residues: Small ribosomal subunit protein uS15 (89 aa).

It belongs to the universal ribosomal protein uS15 family. In terms of assembly, part of the 30S ribosomal subunit. Forms a bridge to the 50S subunit in the 70S ribosome, contacting the 23S rRNA.

Its function is as follows. One of the primary rRNA binding proteins, it binds directly to 16S rRNA where it helps nucleate assembly of the platform of the 30S subunit by binding and bridging several RNA helices of the 16S rRNA. Functionally, forms an intersubunit bridge (bridge B4) with the 23S rRNA of the 50S subunit in the ribosome. The chain is Small ribosomal subunit protein uS15 from Trichodesmium erythraeum (strain IMS101).